The primary structure comprises 1136 residues: Phytochrome (1136 aa).

The disordered stretch occupies residues 1-28 (MSTTRPRAATHSASSGSVSRSSKHSARV). Over residues 11 to 20 (HSASSGSVSR) the composition is skewed to low complexity. The GAF domain occupies 231–414 (DIRLLCDTVV…VFGIQLNKEV (184 aa)). Position 336 (C336) interacts with phytochromobilin. PAS domains lie at 629-699 (VTNE…LQGE) and 762-833 (DYRA…TKLR). Residues 913 to 1132 (YIRQEIRNPL…IINVEFPLAQ (220 aa)) form the Histidine kinase domain.

The protein belongs to the phytochrome family. In terms of assembly, homodimer. Post-translationally, contains one covalently linked phytochromobilin chromophore.

Regulatory photoreceptor which exists in two forms that are reversibly interconvertible by light: the Pr form that absorbs maximally in the red region of the spectrum and the Pfr form that absorbs maximally in the far-red region. Photoconversion of Pr to Pfr induces an array of morphogenic responses, whereas reconversion of Pfr to Pr cancels the induction of those responses. Pfr controls the expression of a number of nuclear genes including those encoding the small subunit of ribulose-bisphosphate carboxylase, chlorophyll A/B binding protein, protochlorophyllide reductase, rRNA, etc. It also controls the expression of its own gene(s) in a negative feedback fashion. This Picea abies (Norway spruce) protein is Phytochrome.